The chain runs to 549 residues: Cytoplasmic trehalase (549 aa).

Substrate contacts are provided by residues arginine 168, 175–176, asparagine 212, 221–223, 292–294, and glycine 324; these read WD, RSQ, and RDE. Active-site proton donor/acceptor residues include aspartate 326 and glutamate 509. Glutamate 525 is a binding site for substrate.

The protein belongs to the glycosyl hydrolase 37 family. In terms of assembly, monomer.

The protein resides in the cytoplasm. It catalyses the reaction alpha,alpha-trehalose + H2O = alpha-D-glucose + beta-D-glucose. The protein operates within glycan degradation; trehalose degradation; D-glucose from alpha,alpha-trehalose: step 1/1. Hydrolyzes trehalose to glucose. Could be involved, in cells returning to low osmolarity conditions, in the utilization of the accumulated cytoplasmic trehalose, which was synthesized in response to high osmolarity. The protein is Cytoplasmic trehalase of Salmonella choleraesuis (strain SC-B67).